The sequence spans 116 residues: MTDKKVTRLRRARKARLKMHELEAVRLCVFRSSQHIYAQVISADGSKVLASASTLDKELRDGATGNIDAATKVGKLVAERAKAAGVSQVAFDRSGFKYHGRVKALADAAREGGLEF.

This sequence belongs to the universal ribosomal protein uL18 family. As to quaternary structure, part of the 50S ribosomal subunit; part of the 5S rRNA/L5/L18/L25 subcomplex. Contacts the 5S and 23S rRNAs.

In terms of biological role, this is one of the proteins that bind and probably mediate the attachment of the 5S RNA into the large ribosomal subunit, where it forms part of the central protuberance. This chain is Large ribosomal subunit protein uL18, found in Pseudomonas entomophila (strain L48).